Reading from the N-terminus, the 146-residue chain is Probable calcium-binding protein CML40 (146 aa).

The EF-hand 1 domain occupies 7-42 (NKRDEYQRVFSCFDKSHQGKVSVSTIERCVDAIKSG). Residues 44–65 (RAVVDQEDTTNPNPEESTDDKS) are disordered. The EF-hand 2 domain maps to 116–146 (KSLKDCEVMISQFDINRDGIINFDEFRAMMQ). Residues aspartate 129, asparagine 131, aspartate 133, and glutamate 140 each contribute to the Ca(2+) site.

Potential calcium sensor. The protein is Probable calcium-binding protein CML40 (CML40) of Arabidopsis thaliana (Mouse-ear cress).